The sequence spans 284 residues: D-tagatose-1,6-bisphosphate aldolase subunit GatY (284 aa).

Catalysis depends on Asp-82, which acts as the Proton donor. Zn(2+)-binding residues include His-83 and His-180. Gly-181 is a dihydroxyacetone phosphate binding site. His-208 contacts Zn(2+). Dihydroxyacetone phosphate is bound by residues 209–211 and 230–233; these read GAS and NVAT.

It belongs to the class II fructose-bisphosphate aldolase family. TagBP aldolase GatY subfamily. As to quaternary structure, forms a complex with GatZ. Zn(2+) is required as a cofactor.

The catalysed reaction is D-tagatofuranose 1,6-bisphosphate = D-glyceraldehyde 3-phosphate + dihydroxyacetone phosphate. It participates in carbohydrate metabolism; D-tagatose 6-phosphate degradation; D-glyceraldehyde 3-phosphate and glycerone phosphate from D-tagatose 6-phosphate: step 2/2. In terms of biological role, catalytic subunit of the tagatose-1,6-bisphosphate aldolase GatYZ, which catalyzes the reversible aldol condensation of dihydroxyacetone phosphate (DHAP or glycerone-phosphate) with glyceraldehyde 3-phosphate (G3P) to produce tagatose 1,6-bisphosphate (TBP). Requires GatZ subunit for full activity and stability. Is involved in the catabolism of galactitol. In Escherichia coli O7:K1 (strain IAI39 / ExPEC), this protein is D-tagatose-1,6-bisphosphate aldolase subunit GatY.